The following is a 416-amino-acid chain: Major facilitator superfamily domain-containing protein 3 (416 aa).

The next 12 membrane-spanning stretches (helical) occupy residues 10–30 (GLYL…PILL), 40–60 (VGLT…APLV), 68–88 (VWLT…AVLP), 99–119 (TTVM…DVAL), 139–158 (QVVA…LVFF), 170–190 (LTAT…LGRL), 204–224 (YLLQ…FVLT), 252–272 (LWSG…GGAL), 295–315 (LGGL…GASL), 324–344 (AALL…TATF), 365–385 (FLAT…GVLA), and 392–412 (LCFA…RLAP).

This sequence belongs to the major facilitator superfamily.

It is found in the membrane. This chain is Major facilitator superfamily domain-containing protein 3 (Mfsd3), found in Rattus norvegicus (Rat).